A 361-amino-acid polypeptide reads, in one-letter code: sn-glycerol-3-phosphate import ATP-binding protein UgpC (361 aa).

The ABC transporter domain occupies 4–235; that stretch reads LSFRNLKKTY…PASTFVAGFI (232 aa). 37–44 serves as a coordination point for ATP; the sequence is GPSGCGKS.

This sequence belongs to the ABC transporter superfamily. sn-glycerol-3-phosphate importer (TC 3.A.1.1.3) family. As to quaternary structure, the complex is composed of two ATP-binding proteins (UgpC), two transmembrane proteins (UgpA and UgpE) and a solute-binding protein (UgpB).

The protein resides in the cell inner membrane. The enzyme catalyses sn-glycerol 3-phosphate(out) + ATP + H2O = sn-glycerol 3-phosphate(in) + ADP + phosphate + H(+). Part of the ABC transporter complex UgpBAEC involved in sn-glycerol-3-phosphate (G3P) import. Responsible for energy coupling to the transport system. The sequence is that of sn-glycerol-3-phosphate import ATP-binding protein UgpC from Bordetella avium (strain 197N).